The sequence spans 167 residues: S-ribosylhomocysteine lyase (167 aa).

Fe cation contacts are provided by histidine 54, histidine 58, and cysteine 128.

The protein belongs to the LuxS family. In terms of assembly, homodimer. It depends on Fe cation as a cofactor.

It catalyses the reaction S-(5-deoxy-D-ribos-5-yl)-L-homocysteine = (S)-4,5-dihydroxypentane-2,3-dione + L-homocysteine. Functionally, involved in the synthesis of autoinducer 2 (AI-2) which is secreted by bacteria and is used to communicate both the cell density and the metabolic potential of the environment. The regulation of gene expression in response to changes in cell density is called quorum sensing. Catalyzes the transformation of S-ribosylhomocysteine (RHC) to homocysteine (HC) and 4,5-dihydroxy-2,3-pentadione (DPD). This Sulfurimonas denitrificans (strain ATCC 33889 / DSM 1251) (Thiomicrospira denitrificans (strain ATCC 33889 / DSM 1251)) protein is S-ribosylhomocysteine lyase.